A 274-amino-acid polypeptide reads, in one-letter code: 2,3,4,5-tetrahydropyridine-2,6-dicarboxylate N-succinyltransferase (274 aa).

The substrate site is built by arginine 104 and aspartate 141.

Belongs to the transferase hexapeptide repeat family. As to quaternary structure, homotrimer.

Its subcellular location is the cytoplasm. It catalyses the reaction (S)-2,3,4,5-tetrahydrodipicolinate + succinyl-CoA + H2O = (S)-2-succinylamino-6-oxoheptanedioate + CoA. It functions in the pathway amino-acid biosynthesis; L-lysine biosynthesis via DAP pathway; LL-2,6-diaminopimelate from (S)-tetrahydrodipicolinate (succinylase route): step 1/3. The polypeptide is 2,3,4,5-tetrahydropyridine-2,6-dicarboxylate N-succinyltransferase (Escherichia coli O127:H6 (strain E2348/69 / EPEC)).